Consider the following 141-residue polypeptide: Acetyltransferase YpeA (141 aa).

One can recognise an N-acetyltransferase domain in the interval 1-141 (MEIRVFRQED…GKRLIEDEEY (141 aa)).

It belongs to the acetyltransferase family. YpeA subfamily.

In Escherichia coli (strain K12), this protein is Acetyltransferase YpeA (ypeA).